Reading from the N-terminus, the 411-residue chain is LL-diaminopimelate aminotransferase (411 aa).

Substrate-binding residues include tyrosine 15 and glycine 42. Pyridoxal 5'-phosphate contacts are provided by residues tyrosine 72, 108-109, tyrosine 132, asparagine 187, tyrosine 218, and 246-248; these read SK and SFS. Substrate is bound by residues lysine 109, tyrosine 132, and asparagine 187. At lysine 249 the chain carries N6-(pyridoxal phosphate)lysine. 2 residues coordinate pyridoxal 5'-phosphate: arginine 257 and asparagine 292. 2 residues coordinate substrate: asparagine 292 and arginine 388.

It belongs to the class-I pyridoxal-phosphate-dependent aminotransferase family. LL-diaminopimelate aminotransferase subfamily. In terms of assembly, homodimer. Requires pyridoxal 5'-phosphate as cofactor.

The enzyme catalyses (2S,6S)-2,6-diaminopimelate + 2-oxoglutarate = (S)-2,3,4,5-tetrahydrodipicolinate + L-glutamate + H2O + H(+). It participates in amino-acid biosynthesis; L-lysine biosynthesis via DAP pathway; LL-2,6-diaminopimelate from (S)-tetrahydrodipicolinate (aminotransferase route): step 1/1. Its function is as follows. Involved in the synthesis of meso-diaminopimelate (m-DAP or DL-DAP), required for both lysine and peptidoglycan biosynthesis. Catalyzes the direct conversion of tetrahydrodipicolinate to LL-diaminopimelate. The protein is LL-diaminopimelate aminotransferase of Nostoc punctiforme (strain ATCC 29133 / PCC 73102).